A 222-amino-acid chain; its full sequence is Ribonuclease 3 (222 aa).

The region spanning 5–127 (PIKLEKKLKL…LIGAIYLDKG (123 aa)) is the RNase III domain. Glutamate 41 is a Mg(2+) binding site. Aspartate 45 is a catalytic residue. Positions 113 and 116 each coordinate Mg(2+). The active site involves glutamate 116. The DRBM domain maps to 152 to 221 (DAKTKLQEYS…ASLCLQDIFK (70 aa)).

Belongs to the ribonuclease III family. As to quaternary structure, homodimer. The cofactor is Mg(2+).

It localises to the cytoplasm. It carries out the reaction Endonucleolytic cleavage to 5'-phosphomonoester.. Its function is as follows. Digests double-stranded RNA. Involved in the processing of primary rRNA transcript to yield the immediate precursors to the large and small rRNAs (23S and 16S). Processes some mRNAs, and tRNAs when they are encoded in the rRNA operon. Processes pre-crRNA and tracrRNA of type II CRISPR loci if present in the organism. The chain is Ribonuclease 3 from Pelagibacter ubique (strain HTCC1062).